A 276-amino-acid polypeptide reads, in one-letter code: Large ribosomal subunit protein uL2 (276 aa).

The tract at residues 223-276 (GVAMNPVDHPHGGGEGRGKGHHPTSPWGLPTKGYKTRRGKRPSDKFIVRRRNEV) is disordered. Basic and acidic residues-rich tracts occupy residues 230–240 (DHPHGGGEGRG) and 263–276 (RPSD…RNEV).

It belongs to the universal ribosomal protein uL2 family. In terms of assembly, part of the 50S ribosomal subunit. Forms a bridge to the 30S subunit in the 70S ribosome.

In terms of biological role, one of the primary rRNA binding proteins. Required for association of the 30S and 50S subunits to form the 70S ribosome, for tRNA binding and peptide bond formation. It has been suggested to have peptidyltransferase activity; this is somewhat controversial. Makes several contacts with the 16S rRNA in the 70S ribosome. The sequence is that of Large ribosomal subunit protein uL2 from Thermotoga neapolitana (strain ATCC 49049 / DSM 4359 / NBRC 107923 / NS-E).